Here is a 506-residue protein sequence, read N- to C-terminus: Plant intracellular Ras-group-related LRR protein 1 (506 aa).

Positions 24 to 48 (TAKSSSSSDVEPPPSKSDPSSSSNH) are disordered. Residues 143–193 (KSILKLNELHESYEKLLKEAEERLVRIYESAEKNAAAVAEEEAAEVEVNEE) are a coiled coil. LRR repeat units lie at residues 203–225 (ENPLDRVDLSGRKLKLLPEAFGK), 226–249 (IQGLLVLNLYNNQLQAIPDSIAGL), 251–272 (NLLELDVSTNFLETLPDSIGLL), 273–295 (SKLKILNVSCNKLTTLPDSICHC), 297–319 (SLVVLDASYNNLTYLPTNIGFEL), 320–342 (VKLEKLLIHLNKIRSLPTSIGEM), 344–364 (SLRYLDAHFNELNGLPNSFGL), 365–389 (LTNLEYLNLSSNFSDLQDLPASFGD), 390–412 (LISLQELDLSNNQIHSLPDAFGT), and 414–436 (VNLTKLNLDQNPLVVPPDEVVKQ). A GVYW motif is present at residues 437 to 449 (GVDAVKMYMGKRW).

It belongs to the SHOC2 family. As to expression, widely expressed.

Functionally, leucine-rich repeat protein that likely mediates protein interactions, possibly in the context of signal transduction. PIRL1 acts redundantly with PIRL9 in the differentiation of microspores into pollen. The protein is Plant intracellular Ras-group-related LRR protein 1 (PIRL1) of Arabidopsis thaliana (Mouse-ear cress).